Here is a 104-residue protein sequence, read N- to C-terminus: Large ribosomal subunit protein uL24 (104 aa).

The protein belongs to the universal ribosomal protein uL24 family. As to quaternary structure, part of the 50S ribosomal subunit.

Functionally, one of two assembly initiator proteins, it binds directly to the 5'-end of the 23S rRNA, where it nucleates assembly of the 50S subunit. Its function is as follows. One of the proteins that surrounds the polypeptide exit tunnel on the outside of the subunit. The polypeptide is Large ribosomal subunit protein uL24 (Azotobacter vinelandii (strain DJ / ATCC BAA-1303)).